The following is a 354-amino-acid chain: UDP-3-O-acylglucosamine N-acyltransferase (354 aa).

The Proton acceptor role is filled by H247.

It belongs to the transferase hexapeptide repeat family. LpxD subfamily. In terms of assembly, homotrimer.

It catalyses the reaction a UDP-3-O-[(3R)-3-hydroxyacyl]-alpha-D-glucosamine + a (3R)-hydroxyacyl-[ACP] = a UDP-2-N,3-O-bis[(3R)-3-hydroxyacyl]-alpha-D-glucosamine + holo-[ACP] + H(+). It participates in bacterial outer membrane biogenesis; LPS lipid A biosynthesis. In terms of biological role, catalyzes the N-acylation of UDP-3-O-acylglucosamine using 3-hydroxyacyl-ACP as the acyl donor. Is involved in the biosynthesis of lipid A, a phosphorylated glycolipid that anchors the lipopolysaccharide to the outer membrane of the cell. This Chlamydia trachomatis serovar A (strain ATCC VR-571B / DSM 19440 / HAR-13) protein is UDP-3-O-acylglucosamine N-acyltransferase.